Here is a 1230-residue protein sequence, read N- to C-terminus: Cullin-associated NEDD8-dissociated protein 1 (1230 aa).

Residue Ala2 is modified to N-acetylalanine. HEAT repeat units follow at residues 2–39, 44–81, 83–119, 131–165, 171–208, 210–247, 248–282, 289–366, 370–407, 424–467, 471–510, and 515–552; these read ASAS…KDSI, DSER…KVKE, QVET…ELPP, CKKI…LSRQ, NFHP…SCGN, VFVD…QAGH, RIGE…FESF, EVYP…TRHE, EFYK…QTRP, PLTM…VLPG, QHIP…NHSP, and PHVQ…VIRP. The residue at position 55 (Lys55) is an N6-acetyllysine. The disordered stretch occupies residues 315–344; sequence DEDEDENAMDADGGDDDDQGSDDEYSDDDD. Phosphoserine is present on Ser335. Position 558 is a phosphoserine (Ser558). HEAT repeat units lie at residues 563–602, 606–643, 646–683, 688–725, 729–768, 770–808, 809–845, 852–889, 890–927, 928–960, 961–998, 1002–1039, 1043–1097, 1099–1133, and 1140–1189; these read PYIK…NLGD, PDLS…LKID, PVLG…NYSD, AMID…VYPS, KISG…TGTN, LGYM…ALTR, ACPK…LGEV, SGQL…GNLP, EYLP…GLKP, YVEN…KLTL, IDPE…DHPQ, PLLK…NKPS, DLLD…DSCL, RLDI…LSTL, and QRLD…IPEA. Position 971 is an N6-acetyllysine (Lys971).

This sequence belongs to the CAND family. Interacts with TBP. Part of a complex that contains CUL1 and RBX1. Interacts with unneddylated cullins: interacts with CUL1, CUL2, CUL3, CUL4A, CUL4B and CUL5. Does not bind neddylated CUL1. Interaction with cullins is abolished in presence of COMMD1, which antagonizes with CAND1 for interacting with cullins. Interacts with ERCC6. Interacts with DCUN1D1, DCUN1D2, DCUN1D3, DCUN1D4 and DCUN1D5; these interactions are bridged by cullins and strongly inhibits the neddylation of cullins. As to expression, detected in heart, brain, spleen, liver, skeletal muscle, kidney and testis.

It is found in the cytoplasm. Its subcellular location is the nucleus. Key assembly factor of SCF (SKP1-CUL1-F-box protein) E3 ubiquitin ligase complexes that promotes the exchange of the substrate-recognition F-box subunit in SCF complexes, thereby playing a key role in the cellular repertoire of SCF complexes. Acts as a F-box protein exchange factor. The exchange activity of CAND1 is coupled with cycles of neddylation conjugation: in the deneddylated state, cullin-binding CAND1 binds CUL1-RBX1, increasing dissociation of the SCF complex and promoting exchange of the F-box protein. Probably plays a similar role in other cullin-RING E3 ubiquitin ligase complexes. May indirectly enhance transcription from various types of promoters. The chain is Cullin-associated NEDD8-dissociated protein 1 (Cand1) from Rattus norvegicus (Rat).